A 558-amino-acid chain; its full sequence is Glucose-6-phosphate isomerase (558 aa).

Residue A2 is modified to N-acetylalanine. K12 carries the post-translational modification N6-acetyllysine. Residues S86 and S107 each carry the phosphoserine modification. K142 is subject to N6-acetyllysine. 159-160 (GS) is a D-glucose 6-phosphate binding site. Residue S185 is modified to Phosphoserine; by CK2. Residue 210–215 (SKTFTT) participates in D-glucose 6-phosphate binding. Phosphothreonine is present on T250. Q354, E358, and H389 together coordinate D-glucose 6-phosphate. E358 (proton donor) is an active-site residue. H389 is an active-site residue. N6-acetyllysine; alternate is present on K454. At K454 the chain carries N6-malonyllysine; alternate. At K454 the chain carries N6-succinyllysine; alternate. At S455 the chain carries Phosphoserine. A D-glucose 6-phosphate-binding site is contributed by K519. K519 is a catalytic residue.

Belongs to the GPI family. Homodimer; in the catalytically active form. Monomer in the secreted form. Post-translationally, phosphorylation at Ser-185 by CK2 has been shown to decrease enzymatic activity and may contribute to secretion by a non-classical secretory pathway. In terms of processing, ISGylated.

It is found in the cytoplasm. It localises to the secreted. It catalyses the reaction alpha-D-glucose 6-phosphate = beta-D-fructose 6-phosphate. It functions in the pathway carbohydrate degradation; glycolysis; D-glyceraldehyde 3-phosphate and glycerone phosphate from D-glucose: step 2/4. In the cytoplasm, catalyzes the conversion of glucose-6-phosphate to fructose-6-phosphate, the second step in glycolysis, and the reverse reaction during gluconeogenesis. Besides it's role as a glycolytic enzyme, also acts as a secreted cytokine: acts as an angiogenic factor (AMF) that stimulates endothelial cell motility. Acts as a neurotrophic factor, neuroleukin, for spinal and sensory neurons. It is secreted by lectin-stimulated T-cells and induces immunoglobulin secretion. This Rattus norvegicus (Rat) protein is Glucose-6-phosphate isomerase.